We begin with the raw amino-acid sequence, 99 residues long: Pyruvate synthase subunit PorD (99 aa).

2 4Fe-4S ferredoxin-type domains span residues Met32–Gly60 and Gly61–Glu91. [4Fe-4S] cluster contacts are provided by Cys41, Cys44, Cys47, Cys51, Cys71, Cys74, Cys77, and Cys81.

Heterotetramer of one alpha, one beta, one delta and one gamma chain. It depends on [4Fe-4S] cluster as a cofactor.

The chain is Pyruvate synthase subunit PorD (porD) from Thermotoga maritima (strain ATCC 43589 / DSM 3109 / JCM 10099 / NBRC 100826 / MSB8).